The following is a 697-amino-acid chain: Glycine--tRNA ligase beta subunit (697 aa).

Belongs to the class-II aminoacyl-tRNA synthetase family. In terms of assembly, tetramer of two alpha and two beta subunits.

It localises to the cytoplasm. It catalyses the reaction tRNA(Gly) + glycine + ATP = glycyl-tRNA(Gly) + AMP + diphosphate. This Cereibacter sphaeroides (strain ATCC 17029 / ATH 2.4.9) (Rhodobacter sphaeroides) protein is Glycine--tRNA ligase beta subunit.